Here is a 375-residue protein sequence, read N- to C-terminus: tRNA-specific 2-thiouridylase MnmA (375 aa).

Residues 12–19 (GMSGGVDS) and Met38 contribute to the ATP site. The segment at 98–100 (NPD) is interaction with target base in tRNA. The Nucleophile role is filled by Cys103. A disulfide bond links Cys103 and Cys200. Gly127 contacts ATP. The tract at residues 150-152 (KDQ) is interaction with tRNA. Cys200 functions as the Cysteine persulfide intermediate in the catalytic mechanism. An interaction with tRNA region spans residues 312–313 (RY).

The protein belongs to the MnmA/TRMU family.

It localises to the cytoplasm. It carries out the reaction S-sulfanyl-L-cysteinyl-[protein] + uridine(34) in tRNA + AH2 + ATP = 2-thiouridine(34) in tRNA + L-cysteinyl-[protein] + A + AMP + diphosphate + H(+). Functionally, catalyzes the 2-thiolation of uridine at the wobble position (U34) of tRNA, leading to the formation of s(2)U34. This is tRNA-specific 2-thiouridylase MnmA from Lactobacillus delbrueckii subsp. bulgaricus (strain ATCC 11842 / DSM 20081 / BCRC 10696 / JCM 1002 / NBRC 13953 / NCIMB 11778 / NCTC 12712 / WDCM 00102 / Lb 14).